Here is a 299-residue protein sequence, read N- to C-terminus: Apolipoprotein E (299 aa).

The signal sequence occupies residues Met-1–Ala-18. 7 repeat units span residues Leu-74–Ala-95, Pro-96–Gly-117, Ala-118–Gly-139, Gln-140–Leu-161, Arg-162–Glu-183, Arg-184–Ala-205, and Gly-224–Glu-245. Residues Leu-74–Glu-245 are 8 X 22 AA approximate tandem repeats. Met-137 is modified (methionine sulfoxide). Ser-141 bears the Phosphoserine mark. An LDL and other lipoprotein receptors binding region spans residues His-152–Arg-162. Heparin is bound at residue Met-156–Arg-159. The lipid-binding and lipoprotein association stretch occupies residues Ser-204–Met-273. Residue Gly-219–Leu-226 participates in heparin binding. The segment at Arg-261–Met-273 is specificity for association with VLDL.

Belongs to the apolipoprotein A1/A4/E family. In terms of assembly, homotetramer. May interact with ABCA1; functionally associated with ABCA1 in the biogenesis of HDLs. May interact with APP/A4 amyloid-beta peptide; the interaction is extremely stable in vitro but its physiological significance is unclear. May interact with MAPT. May interact with MAP2. In the cerebrospinal fluid, interacts with secreted SORL1. Interacts with PMEL; this allows the loading of PMEL luminal fragment on ILVs to induce fibril nucleation. In terms of processing, APOE exists as multiple glycosylated and sialylated glycoforms within cells and in plasma. The extent of glycosylation and sialylation are tissue and context specific. Glycated in plasma VLDL. Post-translationally, phosphorylated by FAM20C in the extracellular medium.

The protein localises to the secreted. It localises to the extracellular space. Its subcellular location is the extracellular matrix. It is found in the extracellular vesicle. The protein resides in the endosome. The protein localises to the multivesicular body. Functionally, APOE is an apolipoprotein, a protein associating with lipid particles, that mainly functions in lipoprotein-mediated lipid transport between organs via the plasma and interstitial fluids. APOE is a core component of plasma lipoproteins and is involved in their production, conversion and clearance. Apolipoproteins are amphipathic molecules that interact both with lipids of the lipoprotein particle core and the aqueous environment of the plasma. As such, APOE associates with chylomicrons, chylomicron remnants, very low density lipoproteins (VLDL) and intermediate density lipoproteins (IDL) but shows a preferential binding to high-density lipoproteins (HDL). It also binds a wide range of cellular receptors including the LDL receptor/LDLR, the LDL receptor-related proteins LRP1, LRP2 and LRP8 and the very low-density lipoprotein receptor/VLDLR that mediate the cellular uptake of the APOE-containing lipoprotein particles. Finally, APOE also has a heparin-binding activity and binds heparan-sulfate proteoglycans on the surface of cells, a property that supports the capture and the receptor-mediated uptake of APOE-containing lipoproteins by cells. A main function of APOE is to mediate lipoprotein clearance through the uptake of chylomicrons, VLDLs, and HDLs by hepatocytes. APOE is also involved in the biosynthesis by the liver of VLDLs as well as their uptake by peripheral tissues ensuring the delivery of triglycerides and energy storage in muscle, heart and adipose tissues. By participating in the lipoprotein-mediated distribution of lipids among tissues, APOE plays a critical role in plasma and tissues lipid homeostasis. APOE is also involved in two steps of reverse cholesterol transport, the HDLs-mediated transport of cholesterol from peripheral tissues to the liver, and thereby plays an important role in cholesterol homeostasis. First, it is functionally associated with ABCA1 in the biogenesis of HDLs in tissues. Second, it is enriched in circulating HDLs and mediates their uptake by hepatocytes. APOE also plays an important role in lipid transport in the central nervous system, regulating neuron survival and sprouting. The sequence is that of Apolipoprotein E (APOE) from Erethizon dorsatum (North American porcupine).